Reading from the N-terminus, the 127-residue chain is UPF0166 protein PYRAB06660 (127 aa).

It belongs to the UPF0166 family.

The protein is UPF0166 protein PYRAB06660 of Pyrococcus abyssi (strain GE5 / Orsay).